Reading from the N-terminus, the 292-residue chain is Homeobox-leucine zipper protein HOX19 (292 aa).

Disordered stretches follow at residues 14–85 (LALG…HSVS), 99–133 (RERAEEADGERVSSTAAGRDDDDDGSTRKKLRLTK), and 217–236 (FAPPPPSSAAHQPSPAPPAP). Residues 28 to 74 (TDAAAAHRGGCRRPSPSSQCPPLEPSLTLSLPDDAAAGAAATATATA) show a composition bias toward low complexity. The segment covering 99–109 (RERAEEADGER) has biased composition (basic and acidic residues). The segment at residues 124 to 183 (STRKKLRLTKEQSALLEDRFREHSTLNPKQKVALAKQLNLRPRQVEVWFQNRRARTKLKQ) is a DNA-binding region (homeobox). Residues 182–226 (KQTEVDCEFLKRCCETLTEENRRLQRELQELRALKFAPPPPSSAA) are leucine-zipper.

It belongs to the HD-ZIP homeobox family. Class II subfamily. As to expression, expressed in seedlings, roots, stems, leaf sheaths and blades and panicles.

The protein resides in the nucleus. Its function is as follows. Probable transcription factor. In Oryza sativa subsp. japonica (Rice), this protein is Homeobox-leucine zipper protein HOX19 (HOX19).